Reading from the N-terminus, the 422-residue chain is N-acylglucosamine 2-epimerase (422 aa).

A leucine-zipper region spans residues 185–206 (LLNLVEQLGEADEELAGISAEL).

This sequence belongs to the N-acylglucosamine 2-epimerase family. In terms of assembly, homodimer. Forms a heterodimer with renin and inhibits its activity.

It carries out the reaction an N-acyl-D-glucosamine = an N-acyl-D-mannosamine. It functions in the pathway amino-sugar metabolism; N-acetylneuraminate degradation. Functionally, catalyzes the interconversion of N-acetylglucosamine to N-acetylmannosamine. Involved in the N-glycolylneuraminic acid (Neu5Gc) degradation pathway. The sequence is that of N-acylglucosamine 2-epimerase (RENBP) from Bos taurus (Bovine).